The chain runs to 409 residues: tRNA(Met) cytidine acetate ligase (409 aa).

Residues Val7–His20, Gly102, Asn169, and Arg194 each bind ATP.

The protein belongs to the TmcAL family.

It localises to the cytoplasm. It catalyses the reaction cytidine(34) in elongator tRNA(Met) + acetate + ATP = N(4)-acetylcytidine(34) in elongator tRNA(Met) + AMP + diphosphate. Catalyzes the formation of N(4)-acetylcytidine (ac(4)C) at the wobble position of elongator tRNA(Met), using acetate and ATP as substrates. First activates an acetate ion to form acetyladenylate (Ac-AMP) and then transfers the acetyl group to tRNA to form ac(4)C34. This chain is tRNA(Met) cytidine acetate ligase, found in Clostridium botulinum (strain Okra / Type B1).